Consider the following 337-residue polypeptide: DNA-directed RNA polymerase subunit alpha (337 aa).

Positions methionine 1 to glutamate 233 are alpha N-terminal domain (alpha-NTD). Residues leucine 267 to aspartate 337 are alpha C-terminal domain (alpha-CTD).

Belongs to the RNA polymerase alpha chain family. In terms of assembly, in plastids the minimal PEP RNA polymerase catalytic core is composed of four subunits: alpha, beta, beta', and beta''. When a (nuclear-encoded) sigma factor is associated with the core the holoenzyme is formed, which can initiate transcription.

It localises to the plastid. Its subcellular location is the chloroplast. It catalyses the reaction RNA(n) + a ribonucleoside 5'-triphosphate = RNA(n+1) + diphosphate. In terms of biological role, DNA-dependent RNA polymerase catalyzes the transcription of DNA into RNA using the four ribonucleoside triphosphates as substrates. This is DNA-directed RNA polymerase subunit alpha from Arabis hirsuta (Hairy rock-cress).